The sequence spans 169 residues: Inorganic pyrophosphatase (169 aa).

Substrate is bound by residues Lys20, Arg34, and Tyr46. Asp56, Asp61, and Asp93 together coordinate Mg(2+). Tyr130 contributes to the substrate binding site.

Belongs to the PPase family. In terms of assembly, homohexamer. Requires Mg(2+) as cofactor.

It localises to the cytoplasm. The enzyme catalyses diphosphate + H2O = 2 phosphate + H(+). Catalyzes the hydrolysis of inorganic pyrophosphate (PPi) forming two phosphate ions. This chain is Inorganic pyrophosphatase, found in Methanosarcina mazei (strain ATCC BAA-159 / DSM 3647 / Goe1 / Go1 / JCM 11833 / OCM 88) (Methanosarcina frisia).